We begin with the raw amino-acid sequence, 548 residues long: ATP synthase subunit alpha (548 aa).

172-179 (GDRKTGKT) provides a ligand contact to ATP. The tract at residues 526–548 (AEAMDEADVEKESVKVRKPAPKK) is disordered.

This sequence belongs to the ATPase alpha/beta chains family. F-type ATPases have 2 components, CF(1) - the catalytic core - and CF(0) - the membrane proton channel. CF(1) has five subunits: alpha(3), beta(3), gamma(1), delta(1), epsilon(1). CF(0) has three main subunits: a(1), b(2) and c(9-12). The alpha and beta chains form an alternating ring which encloses part of the gamma chain. CF(1) is attached to CF(0) by a central stalk formed by the gamma and epsilon chains, while a peripheral stalk is formed by the delta and b chains.

It is found in the cell membrane. The catalysed reaction is ATP + H2O + 4 H(+)(in) = ADP + phosphate + 5 H(+)(out). Produces ATP from ADP in the presence of a proton gradient across the membrane. The alpha chain is a regulatory subunit. In Mycolicibacterium gilvum (strain PYR-GCK) (Mycobacterium gilvum (strain PYR-GCK)), this protein is ATP synthase subunit alpha.